A 95-amino-acid polypeptide reads, in one-letter code: Small ubiquitin-related modifier 4 (95 aa).

The 79-residue stretch at 17-95 (HINLKVAGQD…VLQQQTGGVY (79 aa)) folds into the Ubiquitin-like domain. G93 is covalently cross-linked (Glycyl lysine isopeptide (Gly-Lys) (interchain with K-? in acceptor proteins)). The propeptide occupies 94-95 (VY).

The protein belongs to the ubiquitin family. SUMO subfamily. Interacts with SAE2. Covalently attached to a number of proteins.

Ubiquitin-like protein which can be covalently attached to target lysines as a monomer. Does not seem to be involved in protein degradation and may modulate protein subcellular localization, stability or activity. Upon oxidative stress, conjugates to various anti-oxidant enzymes, chaperones, and stress defense proteins. May also conjugate to NFKBIA, TFAP2A and FOS, negatively regulating their transcriptional activity, and to NR3C1, positively regulating its transcriptional activity. Covalent attachment to its substrates requires prior activation by the E1 complex SAE1-SAE2 and linkage to the E2 enzyme UBE2I. The chain is Small ubiquitin-related modifier 4 (SUMO4) from Sus scrofa (Pig).